The sequence spans 460 residues: MAVKEYTGLSEIRGPIVVVENVSGVRYDEVVELILENGEKRTGRVIIAGENVAIIQVFEGTEEMDIEGTRVRFLGKPLEVSLSPDLLGRTLDGLGKPRDNLGEIVPEKTVDINGSPINPSAREYPRNFIQTGISSIDVLMTLIRGQKLPIFAGNGLPYNRLAVQIARQAKVTTEEEFAVVFAAIGLRKDDANFIVRSLEESGAIKNMVVVLNLASDSVAERIATPRVALTIAEYLAFDLGMHVLVILNDMTNYCEALRELSNYRGEVPGRKGYPGYLYSDLASIYERAGIIKGRSGSITQIPILTMPNDDITHPIPDLTGYITEGQIVMSRSLFGKGIYPPIDILSSLSRLMKDGIGEGYTREDHPDVASQLFSAYSRVMEVRSIASIVGEEDLPEIDKLYLKFGEEFEHLFINQSFDEERSIEQSLDLAWKILSILPETELTRINREYIKKYYKASDET.

It belongs to the ATPase alpha/beta chains family.

Produces ATP from ADP in the presence of a proton gradient across the membrane. The V-type beta chain is a regulatory subunit. In Thermotoga neapolitana (strain ATCC 49049 / DSM 4359 / NBRC 107923 / NS-E), this protein is V-type ATP synthase beta chain.